We begin with the raw amino-acid sequence, 127 residues long: Small ribosomal subunit protein uS11 (127 aa).

It belongs to the universal ribosomal protein uS11 family. In terms of assembly, part of the 30S ribosomal subunit. Interacts with proteins S7 and S18. Binds to IF-3.

In terms of biological role, located on the platform of the 30S subunit, it bridges several disparate RNA helices of the 16S rRNA. Forms part of the Shine-Dalgarno cleft in the 70S ribosome. The sequence is that of Small ribosomal subunit protein uS11 from Chlorobium luteolum (strain DSM 273 / BCRC 81028 / 2530) (Pelodictyon luteolum).